A 372-amino-acid polypeptide reads, in one-letter code: NAD(P)H-quinone oxidoreductase subunit 1 (372 aa).

A run of 8 helical transmembrane segments spans residues 29-49 (WIPLPSFLMIIGATVGVLVVV), 97-117 (WLFTLGPVLVVLPVFVSYLIV), 130-150 (VGIFLWISLSSIAPIGLLMSG), 176-196 (LAFSVLAIAMMSNSLSTIDIV), 204-224 (ILGWNVWRQPVGLIIFWIAAL), 254-274 (FGLFYVGSYVNLVLSALVFAI), 308-328 (SLGITMTVLKAYFLVFIAVLL), and 347-367 (FLLPVSLVNLLLTAALKLAFP).

This sequence belongs to the complex I subunit 1 family. NDH-1 is composed of at least 11 different subunits.

The protein localises to the cellular thylakoid membrane. It carries out the reaction a plastoquinone + NADH + (n+1) H(+)(in) = a plastoquinol + NAD(+) + n H(+)(out). It catalyses the reaction a plastoquinone + NADPH + (n+1) H(+)(in) = a plastoquinol + NADP(+) + n H(+)(out). Functionally, NDH-1 shuttles electrons from an unknown electron donor, via FMN and iron-sulfur (Fe-S) centers, to quinones in the respiratory and/or the photosynthetic chain. The immediate electron acceptor for the enzyme in this species is believed to be plastoquinone. Couples the redox reaction to proton translocation, and thus conserves the redox energy in a proton gradient. The chain is NAD(P)H-quinone oxidoreductase subunit 1 from Rippkaea orientalis (strain PCC 8801 / RF-1) (Cyanothece sp. (strain PCC 8801)).